The primary structure comprises 266 residues: Large ribosomal subunit protein uL2c (266 aa).

Residues 1–24 (MAIHLYKTSTPSTRNGTVDSQVKS) are disordered. The span at 7-24 (KTSTPSTRNGTVDSQVKS) shows a compositional bias: polar residues.

It belongs to the universal ribosomal protein uL2 family. In terms of assembly, part of the 50S ribosomal subunit.

It is found in the plastid. It localises to the chloroplast. The chain is Large ribosomal subunit protein uL2c (rpl2) from Nicotiana debneyi (Debney's tobacco).